The chain runs to 396 residues: Alanine racemase (396 aa).

Residue Lys46 is the Proton acceptor; specific for D-alanine of the active site. Lys46 carries the N6-(pyridoxal phosphate)lysine modification. Position 145 (Arg145) interacts with substrate. The active-site Proton acceptor; specific for L-alanine is the Tyr280. Residue Met328 participates in substrate binding.

It belongs to the alanine racemase family. Pyridoxal 5'-phosphate is required as a cofactor.

The catalysed reaction is L-alanine = D-alanine. It functions in the pathway amino-acid biosynthesis; D-alanine biosynthesis; D-alanine from L-alanine: step 1/1. In terms of biological role, catalyzes the interconversion of L-alanine and D-alanine. May also act on other amino acids. The chain is Alanine racemase (alr) from Brucella abortus (strain 2308).